We begin with the raw amino-acid sequence, 202 residues long: Secreted RxLR effector protein 93 (202 aa).

A signal peptide spans 1-16 (MRFYLTKLFAAAGALA). The disordered stretch occupies residues 29 to 58 (TPVSPLSRSSDHHQSDDSTQRRLRTLNGAD). Residues 37-48 (SSDHHQSDDSTQ) show a composition bias toward basic and acidic residues. Positions 49-61 (RRLRTLNGADEER) match the RxLR-dEER motif.

Belongs to the RxLR effector family.

The protein resides in the secreted. The protein localises to the host nucleus. Its function is as follows. Secreted effector that completely suppresses the host cell death induced by cell death-inducing proteins. This Plasmopara viticola (Downy mildew of grapevine) protein is Secreted RxLR effector protein 93.